Here is a 147-residue protein sequence, read N- to C-terminus: Nucleoside diphosphate kinase (147 aa).

ATP-binding residues include Lys-9, Phe-57, Arg-85, Thr-91, Arg-102, and Asn-112. Thr-91 is modified (phosphothreonine). His-115 (pros-phosphohistidine intermediate) is an active-site residue. Position 122 is a phosphoserine (Ser-122).

The protein belongs to the NDK family. As to quaternary structure, homotetramer. It depends on Mg(2+) as a cofactor.

Its subcellular location is the cytoplasm. The catalysed reaction is a 2'-deoxyribonucleoside 5'-diphosphate + ATP = a 2'-deoxyribonucleoside 5'-triphosphate + ADP. The enzyme catalyses a ribonucleoside 5'-diphosphate + ATP = a ribonucleoside 5'-triphosphate + ADP. Functionally, major role in the synthesis of nucleoside triphosphates other than ATP. The ATP gamma phosphate is transferred to the NDP beta phosphate via a ping-pong mechanism, using a phosphorylated active-site intermediate. In Halalkalibacterium halodurans (strain ATCC BAA-125 / DSM 18197 / FERM 7344 / JCM 9153 / C-125) (Bacillus halodurans), this protein is Nucleoside diphosphate kinase.